The chain runs to 287 residues: Large ribosomal subunit protein uL2 (287 aa).

Residues 221–287 (RGSVMNPCDH…SKRSRGGRDS (67 aa)) are disordered. The segment covering 258–287 (KTRKKNKPSNKLVVRRRRRISKRSRGGRDS) has biased composition (basic residues).

This sequence belongs to the universal ribosomal protein uL2 family. In terms of assembly, part of the 50S ribosomal subunit. Forms a bridge to the 30S subunit in the 70S ribosome.

In terms of biological role, one of the primary rRNA binding proteins. Required for association of the 30S and 50S subunits to form the 70S ribosome, for tRNA binding and peptide bond formation. It has been suggested to have peptidyltransferase activity; this is somewhat controversial. Makes several contacts with the 16S rRNA in the 70S ribosome. This Prochlorococcus marinus (strain MIT 9301) protein is Large ribosomal subunit protein uL2.